Reading from the N-terminus, the 321-residue chain is uncharacterized protein (321 aa).

The Exonuclease domain maps to 130–314 (NLVYDLETTG…NDVDALIKIM (185 aa)).

This is an uncharacterized protein from Acanthamoeba polyphaga (Amoeba).